Consider the following 281-residue polypeptide: Nucleoid occlusion protein (281 aa).

The interval M1–E26 is disordered. Residues G12 to E26 show a composition bias toward basic and acidic residues. Residues E145–L164 constitute a DNA-binding region (H-T-H motif).

This sequence belongs to the ParB family.

Its subcellular location is the cytoplasm. It is found in the nucleoid. Effects nucleoid occlusion by binding relatively nonspecifically to DNA and preventing the assembly of the division machinery in the vicinity of the nucleoid, especially under conditions that disturb the cell cycle. It helps to coordinate cell division and chromosome segregation by preventing the formation of the Z ring through the nucleoid, which would cause chromosome breakage. The sequence is that of Nucleoid occlusion protein from Geobacillus thermodenitrificans (strain NG80-2).